The sequence spans 147 residues: Large ribosomal subunit protein bL9 (147 aa).

The protein belongs to the bacterial ribosomal protein bL9 family.

In terms of biological role, binds to the 23S rRNA. The sequence is that of Large ribosomal subunit protein bL9 from Citrifermentans bemidjiense (strain ATCC BAA-1014 / DSM 16622 / JCM 12645 / Bem) (Geobacter bemidjiensis).